Consider the following 355-residue polypeptide: Gentisate 1,2-dioxygenase (355 aa).

In terms of domain architecture, Cupin type-2 spans 106–174; it reads MQLLLPGEWA…GNEPVVWLDV (69 aa).

It belongs to the gentisate 1,2-dioxygenase family.

The enzyme catalyses 2,5-dihydroxybenzoate + O2 = 3-maleylpyruvate + H(+). The protein operates within aromatic compound metabolism; naphthalene degradation. In terms of biological role, catalyzes the oxygen-dependent ring fission of gentisate between the carboxyl and proximal hydroxyl groups at positions 1 and 2 of the aromatic ring to form maleylpyruvate. Can also catalyze oxidation of alkyl- and halogenated gentisates. Exhibits higher affinity for 3-substituted gentisates than for gentisate but has higher activity with gentisate. The chain is Gentisate 1,2-dioxygenase from Ralstonia sp.